The sequence spans 185 residues: UPF0301 protein HDEF_0602 (185 aa).

It belongs to the UPF0301 (AlgH) family.

The chain is UPF0301 protein HDEF_0602 from Hamiltonella defensa subsp. Acyrthosiphon pisum (strain 5AT).